The sequence spans 511 residues: Cytochrome P450 monooxygenase PUL2 (511 aa).

Residues 14 to 34 (WMAFVYFTPVLFVVLYLLKEW) form a helical membrane-spanning segment. Residues Asn116, Asn141, and Asn442 are each glycosylated (N-linked (GlcNAc...) asparagine). Position 462 (Cys462) interacts with heme.

The protein belongs to the cytochrome P450 family. Heme serves as cofactor.

It localises to the membrane. The protein operates within siderophore biosynthesis. Functionally, cytochrome P450 monooxygenase; part of the PUL gene cluster that mediates the formation of pulcherrimin, a red iron-containing pigment composed of two cyclized and modified leucine molecules that acts as a siderophore, a chelator that binds iron outside the cell for subsequent uptake. Two leucine molecules are cyclized via a cyclodipeptide synthase, and the resulting diketopiperazine is oxidized by a cytochrome P450 monooxygenase to generate pulcherriminic acid (PA), which can then spontaneously bind iron to form pulcherrimin. The probable cyclodipeptide synthase PUL1 and the cytochrome P450 monooxygenase PUL2 encode the enzymes responsible for the two-step pulcherrimin biosynthesis pathway. This Kluyveromyces lactis (strain ATCC 8585 / CBS 2359 / DSM 70799 / NBRC 1267 / NRRL Y-1140 / WM37) (Yeast) protein is Cytochrome P450 monooxygenase PUL2.